A 179-amino-acid chain; its full sequence is Sec-independent protein translocase protein TatB (179 aa).

A helical membrane pass occupies residues 2–22 (FNGVGWGEVVVLLLIGLFVFG). Residues 98–109 (LLGDDPPAAPSL) show a composition bias toward low complexity. Positions 98–179 (LLGDDPPAAP…TEVPFDSDAT (82 aa)) are disordered.

It belongs to the TatB family. The Tat system comprises two distinct complexes: a TatABC complex, containing multiple copies of TatA, TatB and TatC subunits, and a separate TatA complex, containing only TatA subunits. Substrates initially bind to the TatABC complex, which probably triggers association of the separate TatA complex to form the active translocon.

It is found in the cell membrane. In terms of biological role, part of the twin-arginine translocation (Tat) system that transports large folded proteins containing a characteristic twin-arginine motif in their signal peptide across membranes. Together with TatC, TatB is part of a receptor directly interacting with Tat signal peptides. TatB may form an oligomeric binding site that transiently accommodates folded Tat precursor proteins before their translocation. The chain is Sec-independent protein translocase protein TatB from Frankia casuarinae (strain DSM 45818 / CECT 9043 / HFP020203 / CcI3).